We begin with the raw amino-acid sequence, 463 residues long: Major capsid protein (463 aa).

Belongs to the NCLDV major capsid protein family. In terms of assembly, homotrimer.

Its subcellular location is the virion. In terms of biological role, major capsid protein that self assembles to form an icosahedral capsid. Represents around 50% of the total virion protein mass. This Rana tigrina ranavirus protein is Major capsid protein (MCP).